Consider the following 255-residue polypeptide: Hydroxyacylglutathione hydrolase (255 aa).

Zn(2+) is bound by residues His-56, His-58, Asp-60, His-61, His-114, Asp-133, and His-171.

The protein belongs to the metallo-beta-lactamase superfamily. Glyoxalase II family. As to quaternary structure, monomer. Zn(2+) is required as a cofactor.

The enzyme catalyses an S-(2-hydroxyacyl)glutathione + H2O = a 2-hydroxy carboxylate + glutathione + H(+). The protein operates within secondary metabolite metabolism; methylglyoxal degradation; (R)-lactate from methylglyoxal: step 2/2. Its function is as follows. Thiolesterase that catalyzes the hydrolysis of S-D-lactoyl-glutathione to form glutathione and D-lactic acid. The protein is Hydroxyacylglutathione hydrolase of Nitrobacter hamburgensis (strain DSM 10229 / NCIMB 13809 / X14).